Here is a 486-residue protein sequence, read N- to C-terminus: Serine/threonine-protein kinase 33 (486 aa).

The tract at residues 39–100 (VVEMSQTSST…WGRGNFTEGK (62 aa)) is disordered. Residues 41-53 (EMSQTSSTGSSEF) show a composition bias toward polar residues. Residues 57–66 (PEKRKEKGAS) are compositionally biased toward basic and acidic residues. The segment covering 68–80 (DVTSGKDSPSKSS) has biased composition (polar residues). The region spanning 116-381 (YTFGRILGQG…AKELLDNQWL (266 aa)) is the Protein kinase domain. ATP contacts are provided by residues 122 to 130 (LGQGSFGMV) and Lys-145. The Proton acceptor role is filled by Asp-238. Residues 402 to 451 (KNNPESDEESTTDQRDSRSGQEESKVYQPSRNVPDVSNSSDEEEGKQVGR) form a disordered region. At Ser-407 the chain carries Phosphoserine. Positions 413–426 (TDQRDSRSGQEESK) are enriched in basic and acidic residues. Positions 428–440 (YQPSRNVPDVSNS) are enriched in polar residues.

It belongs to the protein kinase superfamily. CAMK Ser/Thr protein kinase family. CaMK subfamily. In terms of assembly, interacts with vimentin/VIM. Post-translationally, autophosphorylated.

It localises to the cytoplasm. The protein localises to the perinuclear region. It catalyses the reaction L-seryl-[protein] + ATP = O-phospho-L-seryl-[protein] + ADP + H(+). The catalysed reaction is L-threonyl-[protein] + ATP = O-phospho-L-threonyl-[protein] + ADP + H(+). In terms of biological role, serine/threonine protein kinase which phosphorylates vimentin/VIM. Therefore may play a specific role in the dynamic behavior of the intermediate filament cytoskeleton. In Bos taurus (Bovine), this protein is Serine/threonine-protein kinase 33 (STK33).